The following is a 457-amino-acid chain: Siroheme synthase (457 aa).

Residues 1 to 204 (MDHLPIFCQL…NDQKAITETT (204 aa)) form a precorrin-2 dehydrogenase /sirohydrochlorin ferrochelatase region. NAD(+) contacts are provided by residues 22–23 (DV) and 43–44 (LA). A Phosphoserine modification is found at Ser-128. A uroporphyrinogen-III C-methyltransferase region spans residues 216–457 (GEVVLVGAGP…RDKLNWFSNH (242 aa)). Pro-225 provides a ligand contact to S-adenosyl-L-methionine. Residue Asp-248 is the Proton acceptor of the active site. Lys-270 functions as the Proton donor in the catalytic mechanism. S-adenosyl-L-methionine is bound by residues 301 to 303 (GGD), Ile-306, 331 to 332 (TA), Met-382, and Gly-411.

This sequence in the N-terminal section; belongs to the precorrin-2 dehydrogenase / sirohydrochlorin ferrochelatase family. In the C-terminal section; belongs to the precorrin methyltransferase family.

The enzyme catalyses uroporphyrinogen III + 2 S-adenosyl-L-methionine = precorrin-2 + 2 S-adenosyl-L-homocysteine + H(+). The catalysed reaction is precorrin-2 + NAD(+) = sirohydrochlorin + NADH + 2 H(+). It carries out the reaction siroheme + 2 H(+) = sirohydrochlorin + Fe(2+). Its pathway is cofactor biosynthesis; adenosylcobalamin biosynthesis; precorrin-2 from uroporphyrinogen III: step 1/1. It participates in cofactor biosynthesis; adenosylcobalamin biosynthesis; sirohydrochlorin from precorrin-2: step 1/1. The protein operates within porphyrin-containing compound metabolism; siroheme biosynthesis; precorrin-2 from uroporphyrinogen III: step 1/1. It functions in the pathway porphyrin-containing compound metabolism; siroheme biosynthesis; siroheme from sirohydrochlorin: step 1/1. Its pathway is porphyrin-containing compound metabolism; siroheme biosynthesis; sirohydrochlorin from precorrin-2: step 1/1. Multifunctional enzyme that catalyzes the SAM-dependent methylations of uroporphyrinogen III at position C-2 and C-7 to form precorrin-2 via precorrin-1. Then it catalyzes the NAD-dependent ring dehydrogenation of precorrin-2 to yield sirohydrochlorin. Finally, it catalyzes the ferrochelation of sirohydrochlorin to yield siroheme. This is Siroheme synthase from Shigella flexneri.